The following is a 252-amino-acid chain: Neurexophilin-3 (252 aa).

Residues M1–G22 form the signal peptide. The segment at Q23–V75 is II. The disordered stretch occupies residues P27 to P59. Residues R45–P55 show a composition bias toward basic residues. N62, N127, N137, and N143 each carry an N-linked (GlcNAc...) asparagine glycan. An III region spans residues W76–F157. An IV (linker domain) region spans residues H158–E166. Residues A167–G252 are v (Cys-rich).

It belongs to the neurexophilin family. In terms of processing, may be proteolytically processed at the boundary between the N-terminal non-conserved and the central conserved domain in neuron-like cells. In terms of tissue distribution, brain. Detected in several other tissues.

It is found in the secreted. Functionally, may be signaling molecules that resemble neuropeptides. Ligand for alpha-neurexins. The sequence is that of Neurexophilin-3 (Nxph3) from Rattus norvegicus (Rat).